Consider the following 377-residue polypeptide: LIM/homeobox protein Lhx9 (377 aa).

LIM zinc-binding domains follow at residues alanine 50 to valine 111 and glutamine 112 to glycine 174. 3 disordered regions span residues asparagine 228–lysine 249, arginine 309–threonine 346, and serine 358–phenylalanine 377. Positions threonine 248–valine 307 form a DNA-binding region, homeobox. Residues leucine 333–threonine 346 are compositionally biased toward low complexity. The span at serine 365 to phenylalanine 377 shows a compositional bias: polar residues.

It localises to the nucleus. Its function is as follows. May be involved in gonadal development. The sequence is that of LIM/homeobox protein Lhx9 (lhx9) from Psalidodon fasciatus (Banded astyanax).